We begin with the raw amino-acid sequence, 59 residues long: Phycobilisome degradation protein NblA (59 aa).

This sequence to chloroplast ycf18.

Involved in phycobilisome (PBS) degradation during nutrient deprivation. May mark the PBS for degradation by covalent association with PBS components or may disrupt the PBS via ionic interactions. The sequence is that of Phycobilisome degradation protein NblA from Synechococcus elongatus (strain ATCC 33912 / PCC 7942 / FACHB-805) (Anacystis nidulans R2).